Consider the following 650-residue polypeptide: MRCSVSSVVRPLSVDPATAIATLCSKGNLREAFQRFRLNIFTNTSLFTPFIQSCTTRQSLPSGKQLHCLLVVSGFSSDKFICNHLMSMYSKLGDFPSAVAVYGRMRKKNYMSSNILINGYVRAGDLVNARKVFDEMPDRKLTTWNAMIAGLIQFEFNEEGLSLFREMHGLGFSPDEYTLGSVFSGSAGLRSVSIGQQIHGYTIKYGLELDLVVNSSLAHMYMRNGKLQDGEIVIRSMPVRNLVAWNTLIMGNAQNGCPETVLYLYKMMKISGCRPNKITFVTVLSSCSDLAIRGQGQQIHAEAIKIGASSVVAVVSSLISMYSKCGCLGDAAKAFSEREDEDEVMWSSMISAYGFHGQGDEAIELFNTMAEQTNMEINEVAFLNLLYACSHSGLKDKGLELFDMMVEKYGFKPGLKHYTCVVDLLGRAGCLDQAEAIIRSMPIKTDIVIWKTLLSACNIHKNAEMAQRVFKEILQIDPNDSACYVLLANVHASAKRWRDVSEVRKSMRDKNVKKEAGISWFEHKGEVHQFKMGDRSQSKSKEIYSYLKELTLEMKLKGYKPDTASVLHDMDEEEKESDLVQHSEKLAVAFALMILPEGAPIRIIKNLRVCSDCHVAFKYISVIKNREITLRDGSRFHHFINGKCSCGDYW.

PPR repeat units lie at residues 43–77 (NTSL…GFSS), 78–112 (DKFI…NYMS), 114–139 (NILI…MPDR), 140–174 (KLTT…GFSP), 175–209 (DEYT…GLEL), 210–240 (DLVV…MPVR), 241–275 (NLVA…GCRP), 276–310 (NKIT…GASS), 311–341 (VVAV…REDE), 342–372 (DEVM…MAEQ), 378–413 (NEVA…GFKP), and 414–444 (GLKH…MPIK). The segment at 449-524 (IWKTLLSACN…EAGISWFEHK (76 aa)) is type E motif. A type E(+) motif region spans residues 525–555 (GEVHQFKMGDRSQSKSKEIYSYLKELTLEMK). The type DYW motif stretch occupies residues 556-650 (LKGYKPDTAS…NGKCSCGDYW (95 aa)).

It belongs to the PPR family. PCMP-H subfamily.

The chain is Pentatricopeptide repeat-containing protein At2g41080 (PCMP-H29) from Arabidopsis thaliana (Mouse-ear cress).